The chain runs to 575 residues: Acyloxyacyl hydrolase (575 aa).

The N-terminal stretch at 1–25 (MKSPWRILVVSPLLLLPLHSSTSRA) is a signal peptide. A propeptide spanning residues 26–34 (HDNQPGTIR) is cleaved from the precursor. The region spanning 36–117 (DHYTCVGCVL…HTLEFCKQEP (82 aa)) is the Saposin B-type domain. Residues 37 to 69 (HYTCVGCVLVVSVIEQLAQVHNSTVQASMERLC) are important for enzyme activity, localization to cytoplasmic vesicles, and protein stability. 8 disulfides stabilise this stretch: cysteine 40–cysteine 113, cysteine 43–cysteine 107, cysteine 69–cysteine 82, cysteine 122–cysteine 453, cysteine 159–cysteine 168, cysteine 205–cysteine 229, cysteine 248–cysteine 328, and cysteine 375–cysteine 459. The N-linked (GlcNAc...) asparagine glycan is linked to asparagine 58. Residues 172–176 (KLAIK) form a lipopolysaccharide binding region. Residues aspartate 183, aspartate 185, aspartate 187, tyrosine 189, aspartate 204, asparagine 206, aspartate 207, aspartate 209, valine 212, aspartate 222, aspartate 226, asparagine 228, asparagine 230, isoleucine 232, and glutamate 244 each coordinate Ca(2+). An N-linked (GlcNAc...) asparagine glycan is attached at asparagine 206. Residue serine 262 is part of the active site. A glycan (N-linked (GlcNAc...) asparagine) is linked at asparagine 466.

In terms of assembly, heterodimer of the large and small subunits; disulfide-linked. Ca(2+) serves as cofactor. Cleaved into a large and a small subunit. Post-translationally, the small subunit is N-glycosylated.

Its subcellular location is the secreted. It localises to the cytoplasmic vesicle. It catalyses the reaction a 3-(acyloxy)acyl derivative of bacterial toxin + H2O = a 3-hydroxyacyl derivative of bacterial toxin + a fatty acid + H(+). In terms of biological role, removes the secondary (acyloxyacyl-linked) fatty acyl chains from the lipid A region of bacterial lipopolysaccharides (LPS). By breaking down LPS, terminates the host response to bacterial infection and prevents prolonged and damaging inflammatory responses. In peritoneal macrophages, seems to be important for recovery from a state of immune tolerance following infection by Gram-negative bacteria. The protein is Acyloxyacyl hydrolase of Oryctolagus cuniculus (Rabbit).